Reading from the N-terminus, the 431-residue chain is Enolase (431 aa).

Gln166 lines the (2R)-2-phosphoglycerate pocket. Glu208 acts as the Proton donor in catalysis. Positions 245, 289, and 316 each coordinate Mg(2+). The (2R)-2-phosphoglycerate site is built by Lys341, Arg370, Ser371, and Lys392. The active-site Proton acceptor is Lys341.

The protein belongs to the enolase family. Requires Mg(2+) as cofactor.

It localises to the cytoplasm. The protein resides in the secreted. Its subcellular location is the cell surface. The catalysed reaction is (2R)-2-phosphoglycerate = phosphoenolpyruvate + H2O. Its pathway is carbohydrate degradation; glycolysis; pyruvate from D-glyceraldehyde 3-phosphate: step 4/5. In terms of biological role, catalyzes the reversible conversion of 2-phosphoglycerate (2-PG) into phosphoenolpyruvate (PEP). It is essential for the degradation of carbohydrates via glycolysis. The protein is Enolase of Ruminiclostridium cellulolyticum (strain ATCC 35319 / DSM 5812 / JCM 6584 / H10) (Clostridium cellulolyticum).